The primary structure comprises 359 residues: MAADGKNVLIMAGGTGGHVFPALACAREFQARGYSVHWLGTPRGIENELVPQAGLPLHLIQVTGLRGKGKLSLLKAPFTLVKAVLQARRIVRELKPVCVIGFGGYVTGPGGVAARLCGVPLVIHEQNARAGTANRLLVPLAARVCEAFPGTFEANDKLRTTGNPVRPELFMDAQRAPLAERRARLLVMGGSLGAEPLNKLLPKALSEVPANLRPEVFHQAGKNHAPTTAERYHEAGVEAQVEPFIKDMAHAYGWADMVVCRAGALTVSELAAAGLPSVLVPLPHAIDDHQTHNAQYLAREGAAFLMPQATTGAAQLAERLNEVLMQPEKLNTMAGTARRLAKPAATSTVVDICLEVAHG.

UDP-N-acetyl-alpha-D-glucosamine contacts are provided by residues 15 to 17 (TGG), asparagine 127, arginine 166, serine 191, isoleucine 245, 264 to 269 (ALTVSE), and glutamine 290.

It belongs to the glycosyltransferase 28 family. MurG subfamily.

Its subcellular location is the cell inner membrane. The enzyme catalyses di-trans,octa-cis-undecaprenyl diphospho-N-acetyl-alpha-D-muramoyl-L-alanyl-D-glutamyl-meso-2,6-diaminopimeloyl-D-alanyl-D-alanine + UDP-N-acetyl-alpha-D-glucosamine = di-trans,octa-cis-undecaprenyl diphospho-[N-acetyl-alpha-D-glucosaminyl-(1-&gt;4)]-N-acetyl-alpha-D-muramoyl-L-alanyl-D-glutamyl-meso-2,6-diaminopimeloyl-D-alanyl-D-alanine + UDP + H(+). Its pathway is cell wall biogenesis; peptidoglycan biosynthesis. Its function is as follows. Cell wall formation. Catalyzes the transfer of a GlcNAc subunit on undecaprenyl-pyrophosphoryl-MurNAc-pentapeptide (lipid intermediate I) to form undecaprenyl-pyrophosphoryl-MurNAc-(pentapeptide)GlcNAc (lipid intermediate II). The polypeptide is UDP-N-acetylglucosamine--N-acetylmuramyl-(pentapeptide) pyrophosphoryl-undecaprenol N-acetylglucosamine transferase (Pseudomonas entomophila (strain L48)).